The sequence spans 971 residues: Exportin-2 (971 aa).

Met1 is subject to N-acetylmethionine. The region spanning 29-102 is the Importin N-terminal domain; that stretch reads AEKFLESVEG…KANIVHLMLS (74 aa). At Ser112 the chain carries Phosphoserine. N6-acetyllysine occurs at positions 574 and 824. The residue at position 931 (Ser931) is a Phosphoserine.

It belongs to the XPO2/CSE1 family. In terms of assembly, found in a complex with CSE1L/XPO2, Ran and KPNA2. Binds with high affinity to importin-alpha only in the presence of RanGTP. The complex is dissociated by the combined action of RanBP1 and RanGAP1. Interacts with CFTR.

The protein localises to the cytoplasm. It localises to the nucleus. Export receptor for importin-alpha. Mediates importin-alpha re-export from the nucleus to the cytoplasm after import substrates (cargos) have been released into the nucleoplasm. In the nucleus binds cooperatively to importin-alpha and to the GTPase Ran in its active GTP-bound form. Docking of this trimeric complex to the nuclear pore complex (NPC) is mediated through binding to nucleoporins. Upon transit of a nuclear export complex into the cytoplasm, disassembling of the complex and hydrolysis of Ran-GTP to Ran-GDP (induced by RANBP1 and RANGAP1, respectively) cause release of the importin-alpha from the export receptor. CSE1L/XPO2 then return to the nuclear compartment and mediate another round of transport. The directionality of nuclear export is thought to be conferred by an asymmetric distribution of the GTP- and GDP-bound forms of Ran between the cytoplasm and nucleus. The protein is Exportin-2 (CSE1L) of Pongo abelii (Sumatran orangutan).